The following is a 165-amino-acid chain: MIIEGPVIKFGDKIDTDIIIPARYLKYTDPQYLAQHAMEPLDPEFYKKASKGVIIVAGKVFGMGSSREQAAIALKAAGVKAVVAESFARIFYRNAINNGLPVITLPNSTKEIDENSYVKIDVETGEILVGNKVLKGKGITGMALEILQAGGIMEYLKKMQTVNRN.

Belongs to the LeuD family. LeuD type 2 subfamily. In terms of assembly, heterodimer of LeuC and LeuD.

The enzyme catalyses (2R,3S)-3-isopropylmalate = (2S)-2-isopropylmalate. It participates in amino-acid biosynthesis; L-leucine biosynthesis; L-leucine from 3-methyl-2-oxobutanoate: step 2/4. Its function is as follows. Catalyzes the isomerization between 2-isopropylmalate and 3-isopropylmalate, via the formation of 2-isopropylmaleate. This chain is 3-isopropylmalate dehydratase small subunit, found in Saccharolobus islandicus (strain M.14.25 / Kamchatka #1) (Sulfolobus islandicus).